The primary structure comprises 483 residues: ATP-dependent protease ATPase subunit HslU (483 aa).

Residues V18 and 60–65 contribute to the ATP site; that span reads GVGKTE. 2 stretches are compositionally biased toward low complexity: residues 136–147 and 171–181; these read LPGGAPQPAPAQ and AQADASQASPP. Residues 136–212 are disordered; that stretch reads LPGGAPQPAP…HGGKLDDREV (77 aa). The segment covering 182-191 has biased composition (polar residues); that stretch reads TGTGSAPDSR. Positions 192-209 are enriched in basic and acidic residues; the sequence is SSTREKLRTLWHGGKLDD. The ATP site is built by D296, E361, and R433.

This sequence belongs to the ClpX chaperone family. HslU subfamily. As to quaternary structure, a double ring-shaped homohexamer of HslV is capped on each side by a ring-shaped HslU homohexamer. The assembly of the HslU/HslV complex is dependent on binding of ATP.

It is found in the cytoplasm. Its function is as follows. ATPase subunit of a proteasome-like degradation complex; this subunit has chaperone activity. The binding of ATP and its subsequent hydrolysis by HslU are essential for unfolding of protein substrates subsequently hydrolyzed by HslV. HslU recognizes the N-terminal part of its protein substrates and unfolds these before they are guided to HslV for hydrolysis. The polypeptide is ATP-dependent protease ATPase subunit HslU (Nitratidesulfovibrio vulgaris (strain DSM 19637 / Miyazaki F) (Desulfovibrio vulgaris)).